The chain runs to 271 residues: Peroxisomal biogenesis factor 2 (271 aa).

Topologically, residues 1–2 (MS) are peroxisomal matrix. A helical transmembrane segment spans residues 3–29 (RVAQLDSIALDKELYGQFWSEFNAAFN). At 30–33 (TSEH) the chain is on the cytoplasmic side. The helical transmembrane segment at 34-60 (KEEWELALNTVVFMCATRFLPHYGSSC) threads the bilayer. Topologically, residues 61 to 77 (TYGSALSGVVFQCRKRT) are peroxisomal matrix. The chain crosses the membrane as a helical span at residues 78 to 97 (LYVVTVLAGYVWKKITHIIF). Topologically, residues 98 to 101 (NGPH) are cytoplasmic. Residues 102–133 (CGNQMMWLKLYKWVNLLYHGCDVTNFLRFLAA) traverse the membrane as a helical segment. Topologically, residues 134–175 (EGPNARAFLSPLYRAFNVHSTRLIRDGSAIASEFYSNSVFAG) are peroxisomal matrix. The helical transmembrane segment at 176 to 197 (LEYQNRQLLWNALLELFSNTLL) threads the bilayer. The Cytoplasmic portion of the chain corresponds to 198-271 (TKRGLLTFVK…SGRLTASPVY (74 aa)). Residues cysteine 222, cysteine 225, cysteine 237, cysteine 238, cysteine 243, cysteine 246, cysteine 256, and cysteine 259 each coordinate Zn(2+). An RING-type zinc finger spans residues 222-259 (CPRCGGFPTNPYQIACCRANYCYVCVVKALEWSMCDAC).

This sequence belongs to the pex2/pex10/pex12 family. Component of the PEX2-PEX10-PEX12 retrotranslocation channel, composed of PEX2, PEX10 and PEX12.

It is found in the peroxisome membrane. The catalysed reaction is [E2 ubiquitin-conjugating enzyme]-S-ubiquitinyl-L-cysteine + [acceptor protein]-L-cysteine = [E2 ubiquitin-conjugating enzyme]-L-cysteine + [acceptor protein]-S-ubiquitinyl-L-cysteine.. The protein operates within protein modification; protein ubiquitination. Its function is as follows. E3 ubiquitin-protein ligase component of a retrotranslocation channel required for peroxisome organization by mediating export of the PEX5 receptor from peroxisomes to the cytosol, thereby promoting PEX5 recycling. The retrotranslocation channel is composed of PEX2, PEX10 and PEX12; each subunit contributing transmembrane segments that coassemble into an open channel that specifically allows the passage of PEX5 through the peroxisomal membrane. PEX2 also regulates peroxisome organization by acting as a E3 ubiquitin-protein ligase. PEX2 ubiquitinates PEX5 during its passage through the retrotranslocation channel: catalyzes monoubiquitination of PEX5 at 'Cys-6', a modification that acts as a signal for PEX5 extraction into the cytosol. The polypeptide is Peroxisomal biogenesis factor 2 (Saccharomyces cerevisiae (strain ATCC 204508 / S288c) (Baker's yeast)).